Consider the following 277-residue polypeptide: Shikimate dehydrogenase (NADP(+)) (277 aa).

Residues 15–17 and threonine 62 each bind shikimate; that span reads SLS. Lysine 66 acts as the Proton acceptor in catalysis. Shikimate is bound by residues asparagine 87 and aspartate 102. NADP(+) is bound by residues 127–131 and isoleucine 219; that span reads GAGGA. Tyrosine 221 contributes to the shikimate binding site. Glycine 242 contributes to the NADP(+) binding site.

Belongs to the shikimate dehydrogenase family. As to quaternary structure, homodimer.

It carries out the reaction shikimate + NADP(+) = 3-dehydroshikimate + NADPH + H(+). The protein operates within metabolic intermediate biosynthesis; chorismate biosynthesis; chorismate from D-erythrose 4-phosphate and phosphoenolpyruvate: step 4/7. Functionally, involved in the biosynthesis of the chorismate, which leads to the biosynthesis of aromatic amino acids. Catalyzes the reversible NADPH linked reduction of 3-dehydroshikimate (DHSA) to yield shikimate (SA). The chain is Shikimate dehydrogenase (NADP(+)) from Bacillus cytotoxicus (strain DSM 22905 / CIP 110041 / 391-98 / NVH 391-98).